The chain runs to 944 residues: Serine/threonine-protein kinase PLK4 (944 aa).

One can recognise a Protein kinase domain in the interval Phe12–Met265. ATP contacts are provided by residues Leu18 to Val26 and Lys41. Asp136 functions as the Proton acceptor in the catalytic mechanism. Disordered regions lie at residues Lys327–Arg396, Arg432–Asp463, and Leu530–Phe561. Polar residues predominate over residues Arg378 to Ser394. Over residues Arg432 to Pro447 the composition is skewed to basic and acidic residues. Polar residues predominate over residues Phe548–Phe561. The Cryptic POLO box 1 (CPB1) domain maps to Thr565–Lys678. Positions Thr679 to Pro791 constitute a Cryptic POLO box 2 (CPB2) domain. The tract at residues Ala786 to Gln809 is disordered. The POLO box domain maps to Gln862 to Ser940.

Belongs to the protein kinase superfamily. Ser/Thr protein kinase family. CDC5/Polo subfamily. Homodimer. In terms of processing, ubiquitinated; leading to its degradation by the proteasome.

Its subcellular location is the cytoplasm. The protein localises to the cytoskeleton. It localises to the microtubule organizing center. The protein resides in the centrosome. It is found in the centriole. The catalysed reaction is L-seryl-[protein] + ATP = O-phospho-L-seryl-[protein] + ADP + H(+). It catalyses the reaction L-threonyl-[protein] + ATP = O-phospho-L-threonyl-[protein] + ADP + H(+). Functionally, serine/threonine-protein kinase that plays a central role in centriole duplication. Able to trigger procentriole formation on the surface of the parental centriole cylinder, leading to the recruitment of centriole biogenesis proteins such as sass6, cpap, ccp110, cep135 and gamma-tubulin. When overexpressed, it is able to induce centrosome amplification through the simultaneous generation of multiple procentrioles adjoining each parental centriole during S phase. Its central role in centriole replication suggests a possible role in tumorigenesis, centrosome aberrations being frequently observed in tumors. Also involved in deuterosome-mediated centriole amplification in multiciliated that can generate more than 100 centrioles. In Xenopus laevis (African clawed frog), this protein is Serine/threonine-protein kinase PLK4.